We begin with the raw amino-acid sequence, 61 residues long: Probable tautomerase lin2709 (61 aa).

P2 acts as the Proton acceptor; via imino nitrogen in catalysis.

It belongs to the 4-oxalocrotonate tautomerase family.

In Listeria innocua serovar 6a (strain ATCC BAA-680 / CLIP 11262), this protein is Probable tautomerase lin2709.